The sequence spans 260 residues: Carbonic anhydrase 2 (260 aa).

Position 2 is an N-acetylserine (serine 2). Serine 2 carries the phosphoserine modification. Positions 3-259 (HHWGYGKHNG…LKNRQIKASF (257 aa)) constitute an Alpha-carbonic anhydrase domain. The active-site Proton donor/acceptor is histidine 64. Histidine 94, histidine 96, and histidine 119 together coordinate Zn(2+). 2 positions are modified to phosphoserine: serine 165 and serine 172. Position 198–199 (198–199 (TT)) interacts with substrate.

Belongs to the alpha-carbonic anhydrase family. Interacts with SLC4A4. Interaction with SLC4A7 regulates SLC4A7 transporter activity. Interacts with SLC26A6 isoform 4 (via C-terminus cytoplasmic domain). Zn(2+) serves as cofactor. Co(2+) is required as a cofactor.

The protein resides in the cytoplasm. Its subcellular location is the cell membrane. It carries out the reaction hydrogencarbonate + H(+) = CO2 + H2O. The enzyme catalyses urea = cyanamide + H2O. Activated by X-ray, histamine, L-adrenaline, L- and D-phenylalanine, L- and D-histidine, L-His-OMe and beta-Ala-His (carnosine). Competitively inhibited by saccharin, thioxolone, coumarins, 667-coumate, celecoxib (Celebrex), valdecoxib (Bextra), SC-125, SC-560, diclofenac, acetate, azide, bromide, sulfonamide derivatives such as acetazolamide (AZA), methazolamide (MZA), ethoxzolamide (EZA), dichlorophenamide (DCP), brinzolamide, dansylamide, thiabendazole-5-sulfonamide, trifluoromethane sulfonamide and N-hydroxysulfamide, fructose-based sugar sulfamate RWJ-37497, and Foscarnet (phosphonoformate trisodium salt). Repressed strongly by hydrogen sulfide(HS) and weakly by nitrate (NO(3)). Esterase activity weakly reduced by cyanamide. N-hydroxyurea interferes with zinc binding and inhibit activity. Catalyzes the reversible hydration of carbon dioxide. Can also hydrate cyanamide to urea. Stimulates the chloride-bicarbonate exchange activity of SLC26A6. Essential for bone resorption and osteoclast differentiation. Involved in the regulation of fluid secretion into the anterior chamber of the eye. Contributes to intracellular pH regulation in the duodenal upper villous epithelium during proton-coupled peptide absorption. This is Carbonic anhydrase 2 (CA2) from Homo sapiens (Human).